A 567-amino-acid polypeptide reads, in one-letter code: Protein ESMERALDA 1 (567 aa).

A disordered region spans residues 1-41 (MLAKNRLPGSGHTTPSPPASPRRSPRYRHGRSKAAAGSRFP). The Cytoplasmic segment spans residues 1–65 (MLAKNRLPGS…ILLSVLLRRQ (65 aa)). Positions 23-32 (RSPRYRHGRS) are enriched in basic residues. The chain crosses the membrane as a helical; Signal-anchor for type II membrane protein span at residues 66–86 (GIFLFAPLIYISCMLLYMGTV). The Lumenal segment spans residues 87–567 (SFDVVPIIQR…TPESRPPPAT (481 aa)). 4 N-linked (GlcNAc...) asparagine glycosylation sites follow: asparagine 121, asparagine 145, asparagine 184, and asparagine 238. Residue 331–333 (HLR) participates in substrate binding. Residues asparagine 403, asparagine 419, asparagine 449, asparagine 538, and asparagine 554 are each glycosylated (N-linked (GlcNAc...) asparagine).

The protein belongs to the glycosyltransferase GT106 family. In terms of tissue distribution, ubiquitous.

The protein localises to the golgi apparatus membrane. Its pathway is protein modification; protein glycosylation. Glycosyltransferase that plays a role in cell adhesion. The polypeptide is Protein ESMERALDA 1 (Arabidopsis thaliana (Mouse-ear cress)).